The primary structure comprises 99 residues: CLAVATA3/ESR (CLE)-related protein 17 (99 aa).

An N-terminal signal peptide occupies residues 1–21 (MTHVLVRRQGQGKKRRWDVNM). A compositionally biased stretch (basic and acidic residues) spans 77–89 (LSRDDIYGDDKRV). The tract at residues 77 to 99 (LSRDDIYGDDKRVVHTGPNPLHN) is disordered. Pro-94 is modified (hydroxyproline). An O-linked (Ara...) hydroxyproline glycan is attached at Pro-94.

This sequence belongs to the CLV3/ESR signal peptide family. Post-translationally, the O-glycosylation (arabinosylation) of the hydroxyproline Pro-94 enhances binding affinity of the CLE17p peptide for its receptor. Mostly expressed in seedlings, roots, flowers, stems and apex, and, to a lower extent, in leaves and siliques.

The protein localises to the secreted. Its subcellular location is the extracellular space. Its function is as follows. Extracellular signal peptide that regulates cell fate. Represses root apical meristem maintenance. Regulates the transition of protophloem cells from proliferation to differentiation, thus impinging on postembryonic growth capacity of the root meristem; this signaling pathway requires CRN and CLV2. The polypeptide is CLAVATA3/ESR (CLE)-related protein 17 (Arabidopsis thaliana (Mouse-ear cress)).